We begin with the raw amino-acid sequence, 459 residues long: MHNIHRRHFLKAAGAVTAGLVTANIALNANASSVAPKPSSGKSVIGLIAPKMEVVRVGFIGVGERGFSHVEQFCHLEGVELKAICDTHQAVVDRAVEHIVKQKRPKPAVYTGNDLSYRELLNRDDIDIVIISTPWEWHAPMAIDTMESGKHAFVEVPLALTVEECWQIIDTAERTQKNCMMMENVNYGREELMVLNMVRQGLFGELLHGEAAYIHELRWQMKEINHKTGSWRTYWHTKRNGNLYPTHGLGPVSQYMNINRGDRFDYLTSMSSPALGRALYAKREFPADHERNQLKYINGDMSTSLIKTVKGRTIMVQHDTTTPRPYSRHNLIQGTNGVFAGFPNRIAVENDGFGTSYHKWDTDMQKWYDKYDHPLWQRIGKEAEINGGHGGMDFVMLWRMVYCLRNGEALDQDVYDGASWSVVNILSEQSLNNRSNSVNFPDFTRGAWEHAKPLGIVGA.

The tat-type signal signal peptide spans 1–31 (MHNIHRRHFLKAAGAVTAGLVTANIALNANA). NAD(+)-binding positions include 64–65 (ER), Asp86, 135–138 (WEWH), 155–156 (EV), and Asn184. Residues Tyr213, Arg232, 244–247 (YPTH), and Tyr326 each bind substrate. Residue Tyr244 coordinates NAD(+).

It belongs to the Gfo/Idh/MocA family. Glycosyl hydrolase 109 subfamily. Requires NAD(+) as cofactor. Predicted to be exported by the Tat system. The position of the signal peptide cleavage has not been experimentally proven.

It carries out the reaction Cleavage of non-reducing alpha-(1-&gt;3)-N-acetylgalactosamine residues from human blood group A and AB mucin glycoproteins, Forssman hapten and blood group A lacto series glycolipids.. Its function is as follows. Glycosidase that has specific alpha-N-acetylgalactosaminidase activity. The sequence is that of Alpha-N-acetylgalactosaminidase (nagA) from Shewanella oneidensis (strain ATCC 700550 / JCM 31522 / CIP 106686 / LMG 19005 / NCIMB 14063 / MR-1).